Consider the following 222-residue polypeptide: Transmembrane protein 54 (222 aa).

Transmembrane regions (helical) follow at residues 22–42 (LVLV…HGTV), 62–82 (ILSV…IVLS), 100–120 (ACAL…AMTF), and 155–175 (SSLC…VFAV).

It belongs to the TMEM54 family. As to expression, ubiquitously expressed in cancer cell lines.

The protein localises to the membrane. This is Transmembrane protein 54 (TMEM54) from Homo sapiens (Human).